A 111-amino-acid chain; its full sequence is UPF0342 protein SAG1376 (111 aa).

Residues 52–63 are compositionally biased toward polar residues; it reads QEMMQSGQMPSQ. Positions 52-71 are disordered; it reads QEMMQSGQMPSQEEQDEMSK.

Belongs to the UPF0342 family.

In Streptococcus agalactiae serotype V (strain ATCC BAA-611 / 2603 V/R), this protein is UPF0342 protein SAG1376.